A 154-amino-acid polypeptide reads, in one-letter code: Proteinase inhibitor type-2 P303.51 (154 aa).

An N-terminal signal peptide occupies residues 1–25 (MAVHKEVNFVAYLLIVLGLLVLVSA). A run of 2 repeats spans residues 31 to 87 (AKAC…DPKK) and 88 to 147 (PKAC…DEPK). 8 cysteine pairs are disulfide-bonded: Cys-34–Cys-122, Cys-38–Cys-118, Cys-46–Cys-128, Cys-58–Cys-95, Cys-61–Cys-79, Cys-62–Cys-91, Cys-68–Cys-104, and Cys-121–Cys-139.

This sequence belongs to the protease inhibitor I20 (potato type II proteinase inhibitor) family.

In Solanum tuberosum (Potato), this protein is Proteinase inhibitor type-2 P303.51.